Consider the following 457-residue polypeptide: Proton-translocating ferredoxin:NAD(+) oxidoreductase complex subunit C (457 aa).

4Fe-4S ferredoxin-type domains follow at residues 353–386 (TKND…MLSI) and 396–427 (AKEE…YIRY). Residues Cys-365, Cys-368, Cys-371, Cys-375, Cys-405, Cys-408, Cys-411, and Cys-415 each contribute to the [4Fe-4S] cluster site. The tract at residues 433 to 457 (RAAGEREKAKAAKAKEKKEKEEVLK) is disordered.

Belongs to the 4Fe4S bacterial-type ferredoxin family. RnfC subfamily. As to quaternary structure, the complex is composed of six subunits: RnfA, RnfB, RnfC, RnfD, RnfE and RnfG. [4Fe-4S] cluster serves as cofactor.

The protein localises to the cell membrane. Part of a membrane-bound complex that couples electron transfer with translocation of ions across the membrane. Couples electron transfer from reduced ferredoxin to NAD(+) with translocation of H(+) out of the cell. Essential for energy conservation during autotrophic growth. Contributes to ATP synthesis during heterotrophic growth. The chain is Proton-translocating ferredoxin:NAD(+) oxidoreductase complex subunit C from Clostridium ljungdahlii (strain ATCC 55383 / DSM 13528 / PETC).